Here is a 241-residue protein sequence, read N- to C-terminus: Uridylate kinase (241 aa).

Residue 12 to 15 (KLSG) participates in ATP binding. An involved in allosteric activation by GTP region spans residues 20-25 (GATGYG). UMP is bound at residue glycine 54. ATP contacts are provided by glycine 55 and arginine 59. UMP is bound by residues aspartate 74 and 135 to 142 (TGNPYMTT). Residues asparagine 163, tyrosine 169, and aspartate 172 each contribute to the ATP site.

It belongs to the UMP kinase family. As to quaternary structure, homohexamer.

Its subcellular location is the cytoplasm. It carries out the reaction UMP + ATP = UDP + ADP. It functions in the pathway pyrimidine metabolism; CTP biosynthesis via de novo pathway; UDP from UMP (UMPK route): step 1/1. Its activity is regulated as follows. Allosterically activated by GTP. Inhibited by UTP. Functionally, catalyzes the reversible phosphorylation of UMP to UDP. The chain is Uridylate kinase from Dehalococcoides mccartyi (strain CBDB1).